A 243-amino-acid chain; its full sequence is Probable transcriptional regulatory protein Smal_3128 (243 aa).

The protein belongs to the TACO1 family.

Its subcellular location is the cytoplasm. This Stenotrophomonas maltophilia (strain R551-3) protein is Probable transcriptional regulatory protein Smal_3128.